Reading from the N-terminus, the 309-residue chain is Ribonuclease Z (309 aa).

Residues His63, His65, Asp67, His68, His141, Asp212, and His270 each coordinate Zn(2+). Asp67 (proton acceptor) is an active-site residue.

This sequence belongs to the RNase Z family. In terms of assembly, homodimer. Zn(2+) is required as a cofactor.

The catalysed reaction is Endonucleolytic cleavage of RNA, removing extra 3' nucleotides from tRNA precursor, generating 3' termini of tRNAs. A 3'-hydroxy group is left at the tRNA terminus and a 5'-phosphoryl group is left at the trailer molecule.. Zinc phosphodiesterase, which displays some tRNA 3'-processing endonuclease activity. Probably involved in tRNA maturation, by removing a 3'-trailer from precursor tRNA. This Lactobacillus delbrueckii subsp. bulgaricus (strain ATCC 11842 / DSM 20081 / BCRC 10696 / JCM 1002 / NBRC 13953 / NCIMB 11778 / NCTC 12712 / WDCM 00102 / Lb 14) protein is Ribonuclease Z.